Here is a 367-residue protein sequence, read N- to C-terminus: Large ribosomal subunit protein mL38 (367 aa).

The N-terminal 29 residues, 1–29, are a transit peptide targeting the mitochondrion; the sequence is MLRRSIHTTKILQKPNATSHIWSDFTTRP.

It belongs to the phosphatidylethanolamine-binding protein family. Mitochondrion-specific ribosomal protein mL38 subfamily. Component of the mitochondrial large ribosomal subunit (mt-LSU). Mature yeast 74S mitochondrial ribosomes consist of a small (37S) and a large (54S) subunit. The 37S small subunit contains a 15S ribosomal RNA (15S mt-rRNA) and 34 different proteins. The 54S large subunit contains a 21S rRNA (21S mt-rRNA) and 46 different proteins.

The protein resides in the mitochondrion. Component of the mitochondrial ribosome (mitoribosome), a dedicated translation machinery responsible for the synthesis of mitochondrial genome-encoded proteins, including at least some of the essential transmembrane subunits of the mitochondrial respiratory chain. The mitoribosomes are attached to the mitochondrial inner membrane and translation products are cotranslationally integrated into the membrane. The polypeptide is Large ribosomal subunit protein mL38 (MRPL35) (Saccharomyces cerevisiae (strain ATCC 204508 / S288c) (Baker's yeast)).